The sequence spans 2208 residues: MDEKISSLKDFVRKQIPDRPEFFYQKEALLSQVEVSLILTEGFKLMSCLVEVESCEKNSCVHNSEQKFVDTILAENGIVGPTLPKVMPDGYRYFNKTLLLLEVFVRVRPDEFEKKWKSDMGKLLSLKDDLLRCGISLVPIVDGRCSYNTSIIPEWATERFRWLLIELLKESKEAMDFEIEDQEYQRLIHSLSRTCNQSLGFENIEQLKKVHLNYEDRLNEVILAGLNSDLKESVIREELIKLKAWYKKEVFEKGHGNFVRTNQTSLLKTLQEIGSHAGTTVPECPMCCSKVFDLCYQMMLKIEGKESLNSSVSSDNNNPQISLVGREYLYVLSVCNKIKGKKIFNTRRNTLLFLDLIILNFVTEVFKKVPLGIQSLKVEGLIIGQMLLLTNDRALDILSARRLLIKKIECNESWVKKCGDTLRRVEPSFWTSVCNYVKLPDFESLLLLAEVLCSDAPLLRYEPVQVEESHCTHKDFQLLNINQQDCLFECLSHISLSLINSMKTSFSSRLLINEKDYKRYFGTVRLKECYVQRFLFTEGKCGFLFYQKTGERSRCFSIYLSENGQLTELGSFYADPKRYFLPIFSGCVLRSMCSEMITWLDFDEELMHVVKPQLRSLVLSILCSPTKRAQNFLQGLRYFIMAFVNQAHHKQLMSKLIVECKSASDVLIQRLATKVFYTILTFGEDPGIHMTRKFKFLLNVSYLCHLITKETPDRLTDQIKCFEKFLEPKLEFGSVVVNPSLNGILDPKQEDNMLNGLEKLFSKSLYDVEDLKRPGISKDVLNYCLSLFTRGKLKVTGVLKTDPFKPSFTSTALDLSSNKSVVVPKLDELGNIVSVYDKQKLISSCVASMAERFRTKGRFNLDPDTIDFLIMKNLTNLLSISGESPKASEELSLLYENLPEEITQVYDEIKNDIQVTLGKIGAKGSYKQKNGKEGKAGSPSNAETLESIWAPFGVLREIKIETSTHEIKDFDPGLLSMDIYEKLCTTVFESSLKSSFFIDEVLSICPLELLLKNLTTKSFKENDFFECFKYILIQAGYDQRLGTYEHRSRARFGFREEVVRLRDDVRVSDRESNSEAIAKRLDRSFFTSAALRNLCFYSEESPTEYTCVSSNTGNMKFGLSYKEQVGSNRELYVGDLNTKMMTRLVEDFAEAVCNSMHYTCLNSESEFDRAICDMKMAVNNGDLCLSMDHSKWGPFMSPALFHRFLSGAKLKTMRLGDSVDTKPVLNVLKWHIHKVVEVPYNVAEAYCTGMLKRRLGLMSLQTQSISEAFFHQEIQTKKEVPSHIMSVLDMGQGILHNLSDLYGLISEQFLNYCLDFLYDAIPTSYTSSDDQITMIRMPQQSMETAEEGNADWLELLCFHDFLSSKLNKFVSPKTVCGTFAAEFKSRFFVMGEETPLLTKFVSAALHNVKCKTPSQLAETIDTICDQCVANGVGVSIVSEISKRVNRLIKYSGYPLNPFLAVENQDVKDWVDGSRGYRLQRNIESCSIQESVLKQVRKFAKDVFLKIKRGQVFEEHLIQLIGADGDSAMEGFLSYVDCDKDKLREILEHRWLNLSANGDLRLVLRTKLMSSKRVLEKEQIPTLVKTLQSKLSKSFTKGAKKILAESINKSAFQASVASGFIGFCESVGSKCVRDGSGGFLYIREVVSKIISCQCTLCSANPGIIFCKNALSNVSNFSRPILWDYFSLVLTNACELGEWVFSPTKRPQQPNLLQNPNLFWAVKPKSVRLIEDQLGLGHVLQSIRRSYPKIFEEHLIPFMSDLQVNRTIDFTRLKYLDVCVAIDMMNENLGIVSHLLKRKDNSVYIVKQNECSVAHVREVQYVDHDIGLSPQQVCTNFKLQLVLSSMISPLVISTSVLKSFFWYNEVLKLEDNSLIDIGELTDFVILNKSYGVERVMYLEDMAMGYVVSSVDEPEIHLINAWVLTEHDVKKLESGSKVGDKDGKALAITLNIQFRHRRHSTKYHFTKGVVYSFTVEFQVPPSLQGPNLNTVPVREMVLNASGMLGDHQSLDGVPLVASHPLMTGKKPIDLLTLLSESDIQISDDTGQLMAVYLDFSEFQSLIEDKYSFKIVGPERLDTPIILKGGVYMSEGKRLSTLMVELSGNVIVKALGAIETDKEVGSLLLGLWPYIKTTGQKIKMDQNDFLLLYESHRELLLKSLEGLGGWLDFLDFSVCFSKSLSDLVISDNTGSLRLKGVTCRPIHNPRIVEDID.

The tract at residues 26 to 284 is endonuclease; that stretch reads KEALLSQVEV…SHAGTTVPEC (259 aa). Positions 51, 89, and 102 each coordinate Mn(2+). Lysine 115 is an active-site residue. The region spanning 1172 to 1370 is the RdRp catalytic domain; it reads CDMKMAVNNG…FLSSKLNKFV (199 aa). Position 1330 (aspartate 1330) interacts with Mg(2+).

Belongs to the Bunyavirales RNA polymerase family. As to quaternary structure, homomultimer; the oligomeric structure is essential for the polymerase activity. Interacts with nucleoprotein N. Interacts with protein Z; this interaction inhibits viral transcription and replication, Z partially blocks the product exit tunnel for the releasing nascent RNA product. Mn(2+) is required as a cofactor. It depends on Mg(2+) as a cofactor.

It localises to the virion. The protein resides in the host cytoplasm. The catalysed reaction is RNA(n) + a ribonucleoside 5'-triphosphate = RNA(n+1) + diphosphate. RNA-dependent RNA polymerase, which is responsible for the replication and transcription of the viral RNA genome using antigenomic RNA as an intermediate. During transcription, synthesizes subgenomic RNAs and assures their capping by a cap-snatching mechanism, which involves the endonuclease activity cleaving the host capped pre-mRNAs. These short capped RNAs are then used as primers for viral transcription. The 3'-end of subgenomic mRNAs molecules are heterogeneous and not polyadenylated. The replicase function is to direct synthesis of antigenomic and genomic RNA which are encapsidated and non capped. As a consequence of the use of the same enzyme for both transcription and replication, these mechanisms need to be well coordinated. These processes may be regulated by proteins N and Z in a dose-dependent manner. Z protein inhibits the viral polymerase L und thus the viral transcription and RNA synthesis. This is RNA-directed RNA polymerase L from Hylaeamys megacephalus (Large-headed rice rat).